We begin with the raw amino-acid sequence, 433 residues long: uncharacterized protein (433 aa).

An N-terminal signal peptide occupies residues M1–S26. 8 N-linked (GlcNAc...) asparagine glycosylation sites follow: N59, N72, N125, N159, N210, N275, N282, and N323. A405 is lipidated: GPI-anchor amidated alanine. Residues S406 to S433 constitute a propeptide, removed in mature form.

The protein localises to the cell membrane. This is an uncharacterized protein from Arabidopsis thaliana (Mouse-ear cress).